The following is a 734-amino-acid chain: Photosystem I P700 chlorophyll a apoprotein A2 (734 aa).

The next 8 helical transmembrane spans lie at 46–69 (IFASHFGQLAIIFLWTSGNLFHVA), 135–158 (LYTGALFLLFLSAISLIAGWLHLQ), 175–199 (LNHHLSGLFGVSSLAWTGHLVHVAI), 273–291 (IAHHHLAIAFIFLVAGHMY), 330–353 (LHFQLGLALASLGVITSLVAQHMY), 369–395 (AALYTHHQYIAGFIMTGAFAHGAIFFI), 417–439 (AIISHLSWASLFLGFHTLGLYVH), and 517–535 (FLVHHAIALGLHTTTLILV). [4Fe-4S] cluster-binding residues include Cys-559 and Cys-568. 2 consecutive transmembrane segments (helical) span residues 575–596 (AFYLAVFWMLNTIGWVTFYWHW) and 643–665 (LSVWAWMFLFGHLVWATGFMFLI). Positions 654, 662, and 670 each coordinate chlorophyll a. Residue Trp-671 participates in phylloquinone binding. Residues 707–727 (LVGLAHFSVGYIFTYAAFLIA) traverse the membrane as a helical segment.

The protein belongs to the PsaA/PsaB family. In terms of assembly, the PsaA/B heterodimer binds the P700 chlorophyll special pair and subsequent electron acceptors. PSI consists of a core antenna complex that captures photons, and an electron transfer chain that converts photonic excitation into a charge separation. The eukaryotic PSI reaction center is composed of at least 11 subunits. It depends on P700 is a chlorophyll a/chlorophyll a' dimer, A0 is one or more chlorophyll a, A1 is one or both phylloquinones and FX is a shared 4Fe-4S iron-sulfur center. as a cofactor.

The protein localises to the plastid. Its subcellular location is the chloroplast thylakoid membrane. The enzyme catalyses reduced [plastocyanin] + hnu + oxidized [2Fe-2S]-[ferredoxin] = oxidized [plastocyanin] + reduced [2Fe-2S]-[ferredoxin]. PsaA and PsaB bind P700, the primary electron donor of photosystem I (PSI), as well as the electron acceptors A0, A1 and FX. PSI is a plastocyanin-ferredoxin oxidoreductase, converting photonic excitation into a charge separation, which transfers an electron from the donor P700 chlorophyll pair to the spectroscopically characterized acceptors A0, A1, FX, FA and FB in turn. Oxidized P700 is reduced on the lumenal side of the thylakoid membrane by plastocyanin. This chain is Photosystem I P700 chlorophyll a apoprotein A2, found in Solanum bulbocastanum (Wild potato).